We begin with the raw amino-acid sequence, 127 residues long: Pleckstrin homology-like domain family A member 3 (127 aa).

Residues Lys5 to Thr108 enclose the PH domain.

The protein belongs to the PHLDA3 family.

The protein localises to the cytoplasm. The protein resides in the membrane. P53/tp53-regulated repressor of Akt/akt1 signaling. Represses akt1 by preventing akt1-binding to membrane lipids, thereby inhibiting akt1 translocation to the cellular membrane and activation. Contributes to p53/tp53-dependent apoptosis by repressing akt1 activity. Its direct transcription regulation by p53/tp53 may explain how p53/tp53 can negatively regulate akt1. May act as a tumor suppressor. This Danio rerio (Zebrafish) protein is Pleckstrin homology-like domain family A member 3 (phlda3).